Reading from the N-terminus, the 266-residue chain is Zinc transporter ZupT (266 aa).

The next 8 membrane-spanning stretches (helical) occupy residues 8-28 (LALT…ALMV), 35-55 (FLTF…FVEI), 70-90 (HAAG…IWLI), 123-143 (GIFT…AVFF), 152-172 (GVVI…AVAV), 185-205 (FSYS…GYAL), 209-229 (FLSP…MVYI), and 246-266 (IAIS…LMLA). Positions 134 and 137 each coordinate Fe(2+). Zn(2+)-binding residues include glutamate 137 and histidine 162. Asparagine 163, glutamate 166, and glutamate 195 together coordinate Fe(2+). Glutamate 166 contacts Zn(2+).

The protein belongs to the ZIP transporter (TC 2.A.5) family. ZupT subfamily.

The protein localises to the cell inner membrane. The enzyme catalyses Zn(2+)(in) = Zn(2+)(out). In terms of biological role, mediates zinc uptake. May also transport other divalent cations. The polypeptide is Zinc transporter ZupT (Chlorobium limicola (strain DSM 245 / NBRC 103803 / 6330)).